Consider the following 188-residue polypeptide: Tuftelin (188 aa).

Positions 1–181 form a coiled coil; sequence SLRKTVQDLL…DRMEHLIEKQ (181 aa).

Belongs to the tuftelin family. In terms of assembly, interacts with TFIP11.

The protein resides in the secreted. Its function is as follows. Involved in the structural organization of the epidermis. Involved in the mineralization and structural organization of enamel. This chain is Tuftelin (TUFT1), found in Sus scrofa (Pig).